The sequence spans 253 residues: UPF0280 protein MA_1715 (253 aa).

It belongs to the UPF0280 family.

The sequence is that of UPF0280 protein MA_1715 from Methanosarcina acetivorans (strain ATCC 35395 / DSM 2834 / JCM 12185 / C2A).